Reading from the N-terminus, the 420-residue chain is Glutamyl-tRNA reductase (420 aa).

Substrate-binding positions include 49–52 (TCNR), S109, 114–116 (EPQ), and Q120. The Nucleophile role is filled by C50. 189-194 (GAGETI) contacts NADP(+).

The protein belongs to the glutamyl-tRNA reductase family. In terms of assembly, homodimer.

The catalysed reaction is (S)-4-amino-5-oxopentanoate + tRNA(Glu) + NADP(+) = L-glutamyl-tRNA(Glu) + NADPH + H(+). It functions in the pathway porphyrin-containing compound metabolism; protoporphyrin-IX biosynthesis; 5-aminolevulinate from L-glutamyl-tRNA(Glu): step 1/2. Catalyzes the NADPH-dependent reduction of glutamyl-tRNA(Glu) to glutamate 1-semialdehyde (GSA). This Yersinia enterocolitica serotype O:8 / biotype 1B (strain NCTC 13174 / 8081) protein is Glutamyl-tRNA reductase.